The following is a 181-amino-acid chain: Protein Ves (181 aa).

It belongs to the Ves family.

The sequence is that of Protein Ves from Cronobacter sakazakii (strain ATCC BAA-894) (Enterobacter sakazakii).